The chain runs to 502 residues: 4,4'-diapophytoene desaturase (4,4'-diaponeurosporene-forming) (502 aa).

5 to 17 contributes to the FAD binding site; sequence VIGAGVTGLAAAA.

This sequence belongs to the carotenoid/retinoid oxidoreductase family. CrtN subfamily.

It carries out the reaction 15-cis-4,4'-diapophytoene + 3 FAD + 3 H(+) = all-trans-4,4'-diaponeurosporene + 3 FADH2. It functions in the pathway carotenoid biosynthesis; staphyloxanthin biosynthesis; staphyloxanthin from farnesyl diphosphate: step 2/5. Its function is as follows. Involved in the biosynthesis of the yellow-orange carotenoid staphyloxanthin, which plays a role in the virulence via its protective function against oxidative stress. Catalyzes three successive dehydrogenation reactions that lead to the introduction of three double bonds into 4,4'-diapophytoene (dehydrosqualene), with 4,4'-diapophytofluene and 4,4'-diapo-zeta-carotene as intermediates, and 4,4'-diaponeurosporene (the major deep-yellow pigment in staphylococci strains) as the end product. This chain is 4,4'-diapophytoene desaturase (4,4'-diaponeurosporene-forming), found in Staphylococcus aureus (strain COL).